The following is a 131-amino-acid chain: uncharacterized protein (131 aa).

The protein resides in the plastid. The protein localises to the chloroplast. This is an uncharacterized protein from Chlorella vulgaris (Green alga).